Reading from the N-terminus, the 233-residue chain is Large ribosomal subunit protein uL1 (233 aa).

The protein belongs to the universal ribosomal protein uL1 family. Part of the 50S ribosomal subunit.

Its function is as follows. Binds directly to 23S rRNA. The L1 stalk is quite mobile in the ribosome, and is involved in E site tRNA release. Functionally, protein L1 is also a translational repressor protein, it controls the translation of the L11 operon by binding to its mRNA. The protein is Large ribosomal subunit protein uL1 of Paracoccus denitrificans (strain Pd 1222).